We begin with the raw amino-acid sequence, 370 residues long: Chorismate synthase (370 aa).

Arg48 contributes to the NADP(+) binding site. Residues 125-127 (RSS), 241-242 (NA), Gly286, 301-305 (KPTSS), and Arg327 each bind FMN.

It belongs to the chorismate synthase family. As to quaternary structure, homotetramer. FMNH2 is required as a cofactor.

The enzyme catalyses 5-O-(1-carboxyvinyl)-3-phosphoshikimate = chorismate + phosphate. Its pathway is metabolic intermediate biosynthesis; chorismate biosynthesis; chorismate from D-erythrose 4-phosphate and phosphoenolpyruvate: step 7/7. Catalyzes the anti-1,4-elimination of the C-3 phosphate and the C-6 proR hydrogen from 5-enolpyruvylshikimate-3-phosphate (EPSP) to yield chorismate, which is the branch point compound that serves as the starting substrate for the three terminal pathways of aromatic amino acid biosynthesis. This reaction introduces a second double bond into the aromatic ring system. This chain is Chorismate synthase, found in Ruegeria sp. (strain TM1040) (Silicibacter sp.).